Here is a 171-residue protein sequence, read N- to C-terminus: GTP-dependent dephospho-CoA kinase (171 aa).

4 residues coordinate GTP: aspartate 49, valine 51, aspartate 68, and glutamate 122.

This sequence belongs to the GTP-dependent DPCK family.

The catalysed reaction is 3'-dephospho-CoA + GTP = GDP + CoA + H(+). It participates in cofactor biosynthesis; coenzyme A biosynthesis. Its function is as follows. Catalyzes the GTP-dependent phosphorylation of the 3'-hydroxyl group of dephosphocoenzyme A to form coenzyme A (CoA). This Hyperthermus butylicus (strain DSM 5456 / JCM 9403 / PLM1-5) protein is GTP-dependent dephospho-CoA kinase.